The chain runs to 318 residues: Pantothenate kinase (318 aa).

An ATP-binding site is contributed by 96–103 (GSVAVGKS).

The protein belongs to the prokaryotic pantothenate kinase family.

The protein localises to the cytoplasm. The catalysed reaction is (R)-pantothenate + ATP = (R)-4'-phosphopantothenate + ADP + H(+). Its pathway is cofactor biosynthesis; coenzyme A biosynthesis; CoA from (R)-pantothenate: step 1/5. The chain is Pantothenate kinase from Rhodopseudomonas palustris (strain BisB5).